The sequence spans 209 residues: Large ribosomal subunit protein bL25 (209 aa).

Positions 190-209 (PDASAAPVAAPAAPAKKGKK) are disordered.

It belongs to the bacterial ribosomal protein bL25 family. CTC subfamily. Part of the 50S ribosomal subunit; part of the 5S rRNA/L5/L18/L25 subcomplex. Contacts the 5S rRNA. Binds to the 5S rRNA independently of L5 and L18.

In terms of biological role, this is one of the proteins that binds to the 5S RNA in the ribosome where it forms part of the central protuberance. The sequence is that of Large ribosomal subunit protein bL25 from Delftia acidovorans (strain DSM 14801 / SPH-1).